Reading from the N-terminus, the 272-residue chain is Ribosomal RNA small subunit methyltransferase A (272 aa).

6 residues coordinate S-adenosyl-L-methionine: His-11, Leu-13, Gly-38, Glu-59, Asp-84, and Asn-109.

This sequence belongs to the class I-like SAM-binding methyltransferase superfamily. rRNA adenine N(6)-methyltransferase family. RsmA subfamily.

The protein resides in the cytoplasm. The catalysed reaction is adenosine(1518)/adenosine(1519) in 16S rRNA + 4 S-adenosyl-L-methionine = N(6)-dimethyladenosine(1518)/N(6)-dimethyladenosine(1519) in 16S rRNA + 4 S-adenosyl-L-homocysteine + 4 H(+). In terms of biological role, specifically dimethylates two adjacent adenosines (A1518 and A1519) in the loop of a conserved hairpin near the 3'-end of 16S rRNA in the 30S particle. May play a critical role in biogenesis of 30S subunits. This Rippkaea orientalis (strain PCC 8801 / RF-1) (Cyanothece sp. (strain PCC 8801)) protein is Ribosomal RNA small subunit methyltransferase A.